The following is a 403-amino-acid chain: Acetate kinase (403 aa).

N7 is a Mg(2+) binding site. K14 contacts ATP. A substrate-binding site is contributed by R90. D147 acts as the Proton donor/acceptor in catalysis. Residues 207–211 (HIGNG), 283–285 (DMR), and 331–335 (GVGEN) contribute to the ATP site. E386 lines the Mg(2+) pocket.

It belongs to the acetokinase family. In terms of assembly, homodimer. Mg(2+) is required as a cofactor. It depends on Mn(2+) as a cofactor.

The protein resides in the cytoplasm. The catalysed reaction is acetate + ATP = acetyl phosphate + ADP. The protein operates within metabolic intermediate biosynthesis; acetyl-CoA biosynthesis; acetyl-CoA from acetate: step 1/2. Functionally, catalyzes the formation of acetyl phosphate from acetate and ATP. Can also catalyze the reverse reaction. Phosphorylates propionate (54%) in addition to acetate (100%). Uses GTP (100%), ITP (163%), UTP (56%), and CTP (21%) as phosphoryl donors in addition to ATP (100%). This Thermotoga maritima (strain ATCC 43589 / DSM 3109 / JCM 10099 / NBRC 100826 / MSB8) protein is Acetate kinase.